Here is a 463-residue protein sequence, read N- to C-terminus: Kynureninase 2 (463 aa).

Residues Leu134, Thr135, 162 to 165 (FPSD), Asp247, His250, and Tyr272 each bind pyridoxal 5'-phosphate. Position 273 is an N6-(pyridoxal phosphate)lysine (Lys273). 2 residues coordinate pyridoxal 5'-phosphate: Trp312 and Asn340.

This sequence belongs to the kynureninase family. In terms of assembly, homodimer. Requires pyridoxal 5'-phosphate as cofactor.

It is found in the cytoplasm. It carries out the reaction L-kynurenine + H2O = anthranilate + L-alanine + H(+). The enzyme catalyses 3-hydroxy-L-kynurenine + H2O = 3-hydroxyanthranilate + L-alanine + H(+). The protein operates within amino-acid degradation; L-kynurenine degradation; L-alanine and anthranilate from L-kynurenine: step 1/1. It participates in cofactor biosynthesis; NAD(+) biosynthesis; quinolinate from L-kynurenine: step 2/3. In terms of biological role, catalyzes the cleavage of L-kynurenine (L-Kyn) and L-3-hydroxykynurenine (L-3OHKyn) into anthranilic acid (AA) and 3-hydroxyanthranilic acid (3-OHAA), respectively. This chain is Kynureninase 2 (bna5-2), found in Aspergillus niger (strain ATCC MYA-4892 / CBS 513.88 / FGSC A1513).